A 441-amino-acid polypeptide reads, in one-letter code: Dolichyl-diphosphooligosaccharide--protein glycosyltransferase 48 kDa subunit (441 aa).

A signal peptide spans 1–28 (MATALSGGFSKNALFILSAALMLQAVLG). Topologically, residues 29–410 (DGKTLVLLDN…TQYERFIPSA (382 aa)) are lumenal. Residues 411–431 (FPYYASAFSMMAGLFVFSVVF) traverse the membrane as a helical segment. Over 432-441 (LHMREKEKSD) the chain is Cytoplasmic.

This sequence belongs to the DDOST 48 kDa subunit family. In terms of assembly, component of the oligosaccharyltransferase (OST) complex.

Its subcellular location is the endoplasmic reticulum membrane. The protein operates within protein modification; protein glycosylation. Its function is as follows. Subunit of the oligosaccharyl transferase (OST) complex that catalyzes the initial transfer of a defined glycan (Glc(3)Man(9)GlcNAc(2) in eukaryotes) from the lipid carrier dolichol-pyrophosphate to an asparagine residue within an Asn-X-Ser/Thr consensus motif in nascent polypeptide chains, the first step in protein N-glycosylation. N-glycosylation occurs cotranslationally and the complex associates with the Sec61 complex at the channel-forming translocon complex that mediates protein translocation across the endoplasmic reticulum (ER). All subunits are required for a maximal enzyme activity. Required for the assembly of both SST3A- and SS3B-containing OST complexes. This Danio rerio (Zebrafish) protein is Dolichyl-diphosphooligosaccharide--protein glycosyltransferase 48 kDa subunit.